Reading from the N-terminus, the 670-residue chain is DNA ligase (670 aa).

NAD(+)-binding positions include 32-36, 81-82, and Glu-114; these read DSEYD and SL. Lys-116 acts as the N6-AMP-lysine intermediate in catalysis. NAD(+) contacts are provided by Arg-137, Glu-174, Lys-291, and Lys-315. Zn(2+)-binding residues include Cys-409, Cys-412, Cys-427, and Cys-433. Positions 592–670 constitute a BRCT domain; the sequence is ASENLFKDKT…EEEFLAQITR (79 aa).

This sequence belongs to the NAD-dependent DNA ligase family. LigA subfamily. It depends on Mg(2+) as a cofactor. Mn(2+) is required as a cofactor.

It catalyses the reaction NAD(+) + (deoxyribonucleotide)n-3'-hydroxyl + 5'-phospho-(deoxyribonucleotide)m = (deoxyribonucleotide)n+m + AMP + beta-nicotinamide D-nucleotide.. Its function is as follows. DNA ligase that catalyzes the formation of phosphodiester linkages between 5'-phosphoryl and 3'-hydroxyl groups in double-stranded DNA using NAD as a coenzyme and as the energy source for the reaction. It is essential for DNA replication and repair of damaged DNA. This Haemophilus influenzae (strain PittEE) protein is DNA ligase.